A 136-amino-acid chain; its full sequence is uncharacterized protein (136 aa).

Belongs to the mimivirus L163/R849 family.

This is an uncharacterized protein from Acanthamoeba polyphaga mimivirus (APMV).